The sequence spans 536 residues: CTP synthase (536 aa).

The segment at 1-266 (MKTKFIFVTG…DEQVVEKLNI (266 aa)) is amidoligase domain. Residue serine 14 coordinates CTP. Serine 14 lines the UTP pocket. ATP is bound by residues 15–20 (SIGKGL) and aspartate 72. Aspartate 72 and glutamate 140 together coordinate Mg(2+). CTP is bound by residues 147-149 (DIE), 187-192 (KTKPTQ), and lysine 223. UTP-binding positions include 187-192 (KTKPTQ) and lysine 223. The Glutamine amidotransferase type-1 domain occupies 292–534 (RIAIVGKYVN…IAAALDRKDK (243 aa)). Glycine 354 contributes to the L-glutamine binding site. The Nucleophile; for glutamine hydrolysis role is filled by cysteine 381. L-glutamine contacts are provided by residues 382–385 (LGMQ), glutamate 405, and arginine 462. Catalysis depends on residues histidine 507 and glutamate 509.

It belongs to the CTP synthase family. Homotetramer.

The enzyme catalyses UTP + L-glutamine + ATP + H2O = CTP + L-glutamate + ADP + phosphate + 2 H(+). It catalyses the reaction L-glutamine + H2O = L-glutamate + NH4(+). The catalysed reaction is UTP + NH4(+) + ATP = CTP + ADP + phosphate + 2 H(+). It functions in the pathway pyrimidine metabolism; CTP biosynthesis via de novo pathway; CTP from UDP: step 2/2. Allosterically activated by GTP, when glutamine is the substrate; GTP has no effect on the reaction when ammonia is the substrate. The allosteric effector GTP functions by stabilizing the protein conformation that binds the tetrahedral intermediate(s) formed during glutamine hydrolysis. Inhibited by the product CTP, via allosteric rather than competitive inhibition. Its function is as follows. Catalyzes the ATP-dependent amination of UTP to CTP with either L-glutamine or ammonia as the source of nitrogen. Regulates intracellular CTP levels through interactions with the four ribonucleotide triphosphates. The protein is CTP synthase of Geobacter sulfurreducens (strain ATCC 51573 / DSM 12127 / PCA).